The sequence spans 801 residues: Phenylalanine--tRNA ligase beta subunit (801 aa).

The region spanning 39–147 (GGGLDQVVVA…SDLPLGVPLF (109 aa)) is the tRNA-binding domain. Residues 401 to 477 (VSHRTIRFRV…RLNGYDRIET (77 aa)) form the B5 domain. Mg(2+) contacts are provided by Asp-455, Asp-461, Glu-464, and Glu-465. The 94-residue stretch at 708–801 (SRFPDTFRDI…LVAKLGATIR (94 aa)) folds into the FDX-ACB domain.

The protein belongs to the phenylalanyl-tRNA synthetase beta subunit family. Type 1 subfamily. Tetramer of two alpha and two beta subunits. Mg(2+) is required as a cofactor.

The protein resides in the cytoplasm. The catalysed reaction is tRNA(Phe) + L-phenylalanine + ATP = L-phenylalanyl-tRNA(Phe) + AMP + diphosphate + H(+). This Geobacter sulfurreducens (strain ATCC 51573 / DSM 12127 / PCA) protein is Phenylalanine--tRNA ligase beta subunit.